Here is a 498-residue protein sequence, read N- to C-terminus: Glycerol kinase 1 (498 aa).

Thr12 provides a ligand contact to ADP. 3 residues coordinate ATP: Thr12, Thr13, and Ser14. Residue Thr12 participates in sn-glycerol 3-phosphate binding. Position 16 (Arg16) interacts with ADP. Arg82, Glu83, Tyr134, and Asp243 together coordinate sn-glycerol 3-phosphate. Positions 82, 83, 134, 243, and 244 each coordinate glycerol. The ADP site is built by Thr265 and Gly308. Thr265, Gly308, Gln312, and Gly409 together coordinate ATP. 2 residues coordinate ADP: Gly409 and Asn413.

This sequence belongs to the FGGY kinase family. As to quaternary structure, homotetramer and homodimer (in equilibrium).

The enzyme catalyses glycerol + ATP = sn-glycerol 3-phosphate + ADP + H(+). Its pathway is polyol metabolism; glycerol degradation via glycerol kinase pathway; sn-glycerol 3-phosphate from glycerol: step 1/1. Its activity is regulated as follows. Activated by phosphorylation and inhibited by fructose 1,6-bisphosphate (FBP). In terms of biological role, key enzyme in the regulation of glycerol uptake and metabolism. Catalyzes the phosphorylation of glycerol to yield sn-glycerol 3-phosphate. The protein is Glycerol kinase 1 of Clostridium tetani (strain Massachusetts / E88).